Consider the following 306-residue polypeptide: Mitochondrial 2-oxoglutarate/malate carrier protein (306 aa).

3 Solcar repeats span residues 7-95, 103-194, and 203-292; these read VPNV…LLER, LSFG…AKQA, and DGIF…MNAA. The next 6 membrane-spanning stretches (helical) occupy residues 9 to 38, 72 to 93, 108 to 122, 172 to 192, 205 to 226, and 268 to 286; these read NVVKFAFGGTAGMGATLVVQPLDLVKNRMQ, SAGLLRQATYTTTRLGTYAFLL, KAVLGMTAGGIGSFV, PTVLRAMVVNAAQLATYSQAK, IFCHFLASMISGLATTIASMPV, and FTPYYMRLGPHTVLTFIIL.

Belongs to the mitochondrial carrier (TC 2.A.29) family. Interacts with ant-1.1 and ced-9. Ubiquitously expressed, but highly expressed in the anterior pharynx.

It is found in the mitochondrion. The protein resides in the mitochondrion inner membrane. It carries out the reaction (S)-malate(in) + 2-oxoglutarate(out) = (S)-malate(out) + 2-oxoglutarate(in). The enzyme catalyses malonate(in) + 2-oxoglutarate(out) = malonate(out) + 2-oxoglutarate(in). The catalysed reaction is succinate(in) + 2-oxoglutarate(out) = succinate(out) + 2-oxoglutarate(in). It catalyses the reaction maleate(in) + 2-oxoglutarate(out) = maleate(out) + 2-oxoglutarate(in). It carries out the reaction oxaloacetate(in) + 2-oxoglutarate(out) = oxaloacetate(out) + 2-oxoglutarate(in). Catalyzes the transport of 2-oxoglutarate (alpha-oxoglutarate) across the inner mitochondrial membrane in an electroneutral exchange for malate. Can also exchange 2-oxoglutarate for other dicarboxylic acids such as malonate, succinate, maleate and oxaloacetate, although with lower affinity. Contributes to several metabolic processes, including the malate-aspartate shuttle, the oxoglutarate/isocitrate shuttle, in gluconeogenesis from lactate, and in nitrogen metabolism. Maintains mitochondrial fusion and fission events, and the organization and morphology of cristae. Regulator of apoptosis, insulin secretion and germline proliferation. Furthermore, plays a role in the oxidative stress response regulating endogenous levels of reactive oxygen species (ROS). Involved in the regulation of lin-35/Rb-mediated apoptosis in the germline. The protein is Mitochondrial 2-oxoglutarate/malate carrier protein of Caenorhabditis elegans.